The primary structure comprises 88 residues: Large ribosomal subunit protein bL27 (88 aa).

The span at 1–13 (MATKKGASSSSNG) shows a compositional bias: polar residues. A disordered region spans residues 1-23 (MATKKGASSSSNGRDSEAKRLGV).

It belongs to the bacterial ribosomal protein bL27 family.

The polypeptide is Large ribosomal subunit protein bL27 (Corynebacterium urealyticum (strain ATCC 43042 / DSM 7109)).